Consider the following 81-residue polypeptide: Probable small nuclear ribonucleoprotein G (81 aa).

Residues Gly-5–Val-76 form the Sm domain.

Belongs to the snRNP Sm proteins family.

The protein resides in the nucleus. Its function is as follows. Probable common Sm protein, is found in U1 and U2 snRNPs and may be part of the spliceosome. This chain is Probable small nuclear ribonucleoprotein G (C29), found in Medicago sativa (Alfalfa).